The sequence spans 134 residues: Small ribosomal subunit protein uS9 (134 aa).

The segment at 113–134 is disordered; it reads REVERKKYGLKKARRAPQFSKR. The segment covering 120–134 has biased composition (basic residues); sequence YGLKKARRAPQFSKR.

This sequence belongs to the universal ribosomal protein uS9 family.

The protein is Small ribosomal subunit protein uS9 (rpsI) of Thermotoga maritima (strain ATCC 43589 / DSM 3109 / JCM 10099 / NBRC 100826 / MSB8).